We begin with the raw amino-acid sequence, 717 residues long: uncharacterized protein (717 aa).

This sequence belongs to the asfivirus C717R family.

It localises to the virion. This is an uncharacterized protein from Ornithodoros (relapsing fever ticks).